A 233-amino-acid polypeptide reads, in one-letter code: Putative N-acetylmannosamine-6-phosphate 2-epimerase (233 aa).

It belongs to the NanE family.

It catalyses the reaction an N-acyl-D-glucosamine 6-phosphate = an N-acyl-D-mannosamine 6-phosphate. The protein operates within amino-sugar metabolism; N-acetylneuraminate degradation; D-fructose 6-phosphate from N-acetylneuraminate: step 3/5. Converts N-acetylmannosamine-6-phosphate (ManNAc-6-P) to N-acetylglucosamine-6-phosphate (GlcNAc-6-P). This is Putative N-acetylmannosamine-6-phosphate 2-epimerase from Yersinia pseudotuberculosis serotype IB (strain PB1/+).